Consider the following 333-residue polypeptide: Glutamyl endopeptidase (333 aa).

Positions 1-29 (MKGKFLKVSSLFVATLTTATLVSSPAANA) are cleaved as a signal peptide. Positions 30–68 (LSSKAMDNHPQQSQSSKQQTPKIQKGGNLKPLEQREHAN) are excised as a propeptide. The interval 33–61 (KAMDNHPQQSQSSKQQTPKIQKGGNLKPL) is disordered. Low complexity predominate over residues 40-54 (QQSQSSKQQTPKIQK). Residues His-119, Asp-161, and Ser-237 each act as charge relay system in the active site. A disordered region spans residues 283-333 (FANDDQPNNPDNPDNPNNPDNPNNPDNPNNPNNPDNPDNGDNNNSDNPDAA). The span at 286–333 (DDQPNNPDNPDNPNNPDNPNNPDNPNNPNNPDNPDNGDNNNSDNPDAA) shows a compositional bias: low complexity. Tandem repeats lie at residues 289 to 291 (PNN), 292 to 294 (PDN), 295 to 297 (PDN), 298 to 300 (PNN), 301 to 303 (PDN), 304 to 306 (PNN), 307 to 309 (PDN), 310 to 312 (PNN), 313 to 315 (PNN), 316 to 318 (PDN), and 319 to 321 (PDN). An 11 X 3 AA repeats of P-[DN]-N region spans residues 289–321 (PNNPDNPDNPNNPDNPNNPDNPNNPNNPDNPDN).

The protein belongs to the peptidase S1B family. Proteolytically cleaved by aureolysin (aur). This cleavage leads to the activation of SspA.

It is found in the secreted. It carries out the reaction Preferential cleavage: Glu-|-Xaa, Asp-|-Xaa.. Its function is as follows. Preferentially cleaves peptide bonds on the carboxyl-terminal side of aspartate and glutamate. Along with other extracellular proteases it is involved in colonization and infection of human tissues. Required for proteolytic maturation of thiol protease SspB and inactivation of SspC, an inhibitor of SspB. It is the most important protease for degradation of fibronectin-binding protein (FnBP) and surface protein A, which are involved in adherence to host cells. May also protect bacteria against host defense mechanism by cleaving the immunoglobulin classes IgG, IgA and IgM. May be involved in the stability of secreted lipases. The polypeptide is Glutamyl endopeptidase (sspA) (Staphylococcus aureus (strain MSSA476)).